Reading from the N-terminus, the 226-residue chain is Deoxyribose-phosphate aldolase (226 aa).

Catalysis depends on aspartate 96, which acts as the Proton donor/acceptor. Lysine 157 functions as the Schiff-base intermediate with acetaldehyde in the catalytic mechanism. Lysine 185 acts as the Proton donor/acceptor in catalysis.

It belongs to the DeoC/FbaB aldolase family. DeoC type 1 subfamily.

The protein localises to the cytoplasm. The catalysed reaction is 2-deoxy-D-ribose 5-phosphate = D-glyceraldehyde 3-phosphate + acetaldehyde. The protein operates within carbohydrate degradation; 2-deoxy-D-ribose 1-phosphate degradation; D-glyceraldehyde 3-phosphate and acetaldehyde from 2-deoxy-alpha-D-ribose 1-phosphate: step 2/2. Functionally, catalyzes a reversible aldol reaction between acetaldehyde and D-glyceraldehyde 3-phosphate to generate 2-deoxy-D-ribose 5-phosphate. The sequence is that of Deoxyribose-phosphate aldolase from Trichormus variabilis (strain ATCC 29413 / PCC 7937) (Anabaena variabilis).